Reading from the N-terminus, the 387-residue chain is Cytochrome b (387 aa).

The next 4 membrane-spanning stretches (helical) occupy residues 32–52 (FGSLLACVLVIQIVIGILLAC), 76–98 (FLLRAFHANGASFFFIFLYLHIG), 113–133 (TWNIGVIIFLLTIITAFLGYC), and 179–199 (FFSLHYLMPFVIAALSVMHLI). Heme b is bound by residues H82 and H96. Positions 183 and 197 each coordinate heme b. H202 is a binding site for a ubiquinone. 4 helical membrane passes run 225 to 245 (YLIKDLITIFIFLIGINYMAF), 289 to 309 (QLGVIAMLLSILVLLLLPLLD), 321 to 341 (FGKFFFWTFVADFVILAWIGG), and 348 to 368 (FITIGAIATIFYFSYFFILIP).

It belongs to the cytochrome b family. As to quaternary structure, fungal cytochrome b-c1 complex contains 10 subunits; 3 respiratory subunits, 2 core proteins and 5 low-molecular weight proteins. Cytochrome b-c1 complex is a homodimer. Requires heme b as cofactor.

Its subcellular location is the mitochondrion inner membrane. In terms of biological role, component of the ubiquinol-cytochrome c reductase complex (complex III or cytochrome b-c1 complex) that is part of the mitochondrial respiratory chain. The b-c1 complex mediates electron transfer from ubiquinol to cytochrome c. Contributes to the generation of a proton gradient across the mitochondrial membrane that is then used for ATP synthesis. This is Cytochrome b (cob) from Schizosaccharomyces pombe (strain 972 / ATCC 24843) (Fission yeast).